Consider the following 78-residue polypeptide: Beta-defensin 105A (78 aa).

An N-terminal signal peptide occupies residues 1–27 (MALIRKTFYFLFAVFFILVQLPSGCQA). Intrachain disulfides connect Cys-43/Cys-74, Cys-53/Cys-67, and Cys-57/Cys-73.

Belongs to the beta-defensin family.

The protein resides in the secreted. Functionally, has antimicrobial activity. This Gorilla gorilla gorilla (Western lowland gorilla) protein is Beta-defensin 105A (DEFB105A).